The sequence spans 185 residues: Elongation factor P (185 aa).

The protein belongs to the elongation factor P family.

The protein resides in the cytoplasm. It functions in the pathway protein biosynthesis; polypeptide chain elongation. Its function is as follows. Involved in peptide bond synthesis. Stimulates efficient translation and peptide-bond synthesis on native or reconstituted 70S ribosomes in vitro. Probably functions indirectly by altering the affinity of the ribosome for aminoacyl-tRNA, thus increasing their reactivity as acceptors for peptidyl transferase. This Trichormus variabilis (strain ATCC 29413 / PCC 7937) (Anabaena variabilis) protein is Elongation factor P.